The following is a 347-amino-acid chain: Core-capsid bridging protein (347 aa).

A disordered region spans residues 290–320; that stretch reads GYRGTTFQRRATAPSRRRGPSRRRRRRKATL. Positions 304–318 are enriched in basic residues; it reads SRRRGPSRRRRRRKA.

Belongs to the adenoviridae core-capsid bridging protein family. As to quaternary structure, monomer. Homodimer. Exists in equilibrium between monomers and dimers in solution. Interacts with the histone-like nucleoprotein; this interactions bridge the virus core to the capsid. Interacts with core protein X; this interactions bridge the virus core to the capsid. Interacts with the endosome lysis protein VI; this interactions bridge the virus core to the capsid. Interacts with the peripentonal hexons. Interacts with host NPM1; this interaction might play a role in virus assembly.

The protein resides in the virion. It is found in the host nucleus. It localises to the host nucleolus. Functionally, associates loosely with the viral DNA to form an outer shell around the nucleoprotein-DNA complex and links it with the capsid by binding the endosome lysis protein. Dissociates from the viral genome during entry. Might be involved in nuclear capsid assembly of the viral particles through its association with NPM1/nucleophosmin. The polypeptide is Core-capsid bridging protein (Homo sapiens (Human)).